A 260-amino-acid chain; its full sequence is Homeobox protein Hox-D11b (260 aa).

The span at 1–14 (MFSSSFSYPSKTSP) shows a compositional bias: low complexity. Disordered regions lie at residues 1 to 21 (MFSS…PFLA) and 151 to 206 (ITPG…CTRR). The span at 167–179 (RSPDGESSEERAG) shows a compositional bias: basic and acidic residues. Positions 205–260 (RRKKRCPYSKQQIIELEREFLFNIYINKDRRMQLSHLLRLTDRCVNNPLNQDSFFT) form a DNA-binding region, homeobox; truncated.

Belongs to the Abd-B homeobox family.

It is found in the nucleus. Functionally, sequence-specific transcription factor which is part of a developmental regulatory system that provides cells with specific positional identities on the anterior-posterior axis. The sequence is that of Homeobox protein Hox-D11b (hoxd11b) from Takifugu rubripes (Japanese pufferfish).